The following is a 375-amino-acid chain: 4-hydroxy-3-methylbut-2-en-1-yl diphosphate synthase (flavodoxin) (375 aa).

[4Fe-4S] cluster-binding residues include Cys-268, Cys-271, Cys-303, and Glu-310.

It belongs to the IspG family. It depends on [4Fe-4S] cluster as a cofactor.

The catalysed reaction is (2E)-4-hydroxy-3-methylbut-2-enyl diphosphate + oxidized [flavodoxin] + H2O + 2 H(+) = 2-C-methyl-D-erythritol 2,4-cyclic diphosphate + reduced [flavodoxin]. Its pathway is isoprenoid biosynthesis; isopentenyl diphosphate biosynthesis via DXP pathway; isopentenyl diphosphate from 1-deoxy-D-xylulose 5-phosphate: step 5/6. In terms of biological role, converts 2C-methyl-D-erythritol 2,4-cyclodiphosphate (ME-2,4cPP) into 1-hydroxy-2-methyl-2-(E)-butenyl 4-diphosphate. The chain is 4-hydroxy-3-methylbut-2-en-1-yl diphosphate synthase (flavodoxin) from Bacillus velezensis (strain DSM 23117 / BGSC 10A6 / LMG 26770 / FZB42) (Bacillus amyloliquefaciens subsp. plantarum).